Consider the following 149-residue polypeptide: Large ribosomal subunit protein bL9 (149 aa).

It belongs to the bacterial ribosomal protein bL9 family.

Functionally, binds to the 23S rRNA. The polypeptide is Large ribosomal subunit protein bL9 (Magnetococcus marinus (strain ATCC BAA-1437 / JCM 17883 / MC-1)).